The chain runs to 102 residues: Virulence plasmid protein pGP4-D (102 aa).

The chain is Virulence plasmid protein pGP4-D from Chlamydia trachomatis serovar L2 (strain ATCC VR-902B / DSM 19102 / 434/Bu).